We begin with the raw amino-acid sequence, 468 residues long: 3-isopropylmalate dehydratase large subunit (468 aa).

Cys-349, Cys-409, and Cys-412 together coordinate [4Fe-4S] cluster.

It belongs to the aconitase/IPM isomerase family. LeuC type 1 subfamily. In terms of assembly, heterodimer of LeuC and LeuD. [4Fe-4S] cluster is required as a cofactor.

It carries out the reaction (2R,3S)-3-isopropylmalate = (2S)-2-isopropylmalate. It functions in the pathway amino-acid biosynthesis; L-leucine biosynthesis; L-leucine from 3-methyl-2-oxobutanoate: step 2/4. Catalyzes the isomerization between 2-isopropylmalate and 3-isopropylmalate, via the formation of 2-isopropylmaleate. This is 3-isopropylmalate dehydratase large subunit from Ruegeria pomeroyi (strain ATCC 700808 / DSM 15171 / DSS-3) (Silicibacter pomeroyi).